Here is a 194-residue protein sequence, read N- to C-terminus: Anthranilate synthase component 2 (194 aa).

Residues 2–194 (KIFFIDNFDS…QSVGFLRELS (193 aa)) enclose the Glutamine amidotransferase type-1 domain. An L-glutamine-binding site is contributed by 57–59 (GPG). Cys-84 (nucleophile; for GATase activity) is an active-site residue. Residues Gln-88 and 134-135 (SL) each bind L-glutamine. Catalysis depends on for GATase activity residues His-170 and Glu-172.

Heterotetramer consisting of two non-identical subunits: a beta subunit (TrpG) and a large alpha subunit (TrpE).

It catalyses the reaction chorismate + L-glutamine = anthranilate + pyruvate + L-glutamate + H(+). It functions in the pathway amino-acid biosynthesis; L-tryptophan biosynthesis; L-tryptophan from chorismate: step 1/5. Its function is as follows. Part of a heterotetrameric complex that catalyzes the two-step biosynthesis of anthranilate, an intermediate in the biosynthesis of L-tryptophan. In the first step, the glutamine-binding beta subunit (TrpG) of anthranilate synthase (AS) provides the glutamine amidotransferase activity which generates ammonia as a substrate that, along with chorismate, is used in the second step, catalyzed by the large alpha subunit of AS (TrpE) to produce anthranilate. In the absence of TrpG, TrpE can synthesize anthranilate directly from chorismate and high concentrations of ammonia. The chain is Anthranilate synthase component 2 (trpG) from Helicobacter pylori (strain J99 / ATCC 700824) (Campylobacter pylori J99).